The chain runs to 530 residues: MSVDTYTETTKIDKLLKKPTSHFQLSTTQLYNKILDNNEGVLTELGAVNASTGKYTGRSPKDKFFVSEPSYRDNIDWGEINQPIDEETFLKLYHKVLDYLDKKDELYVFKGYAGSDKDTMLKLTVINELAWHNLFAKNMFIRPESKEEATKIKPNFTIVSVPHFKADPEVDGTKSETFVIISFKHKVILIGGTEYAGEMKKGIFSVMNYLLPMQDIMSMHCSANVGEKGDVALFFGLSGTGKTTLSADPHRKLIGDDEHGWNKNGVFNIEGGCYAKAINLSKEKEPQIFDAIKYGAILENTVVAEDGSVDFEDNRYTENTRAAYPINHIDNIVVPSKAAHPNTIIFLTADAFGVIPPISKLNKDQAMYHFLSGFTSKLAGTERGVTEPEPSFSTCFGAPFFPLHPTVYADLLGELIDLHDVDVYLVNTGWTGGKYGVGRRISLHYTRQMVNQAISGKLKNAEYTKDSTFGLSIPVEIEDVPKTILNPINAWSDKEKYKAQAEDLIQRFEKNFEKFGEKVEHIAKKGSFNK.

Substrate contacts are provided by Arg-58, Tyr-195, and Lys-201. ATP contacts are provided by residues Lys-201, His-220, and 236–244; that span reads GLSGTGKTT. Lys-201 and His-220 together coordinate Mn(2+). Asp-257 contacts Mn(2+). ATP contacts are provided by residues Glu-285, Arg-321, 440–441, and Thr-446; that span reads RI. Substrate is bound at residue Arg-321.

This sequence belongs to the phosphoenolpyruvate carboxykinase (ATP) family. It depends on Mn(2+) as a cofactor.

It is found in the cytoplasm. It carries out the reaction oxaloacetate + ATP = phosphoenolpyruvate + ADP + CO2. It participates in carbohydrate biosynthesis; gluconeogenesis. Functionally, involved in the gluconeogenesis. Catalyzes the conversion of oxaloacetate (OAA) to phosphoenolpyruvate (PEP) through direct phosphoryl transfer between the nucleoside triphosphate and OAA. The polypeptide is Phosphoenolpyruvate carboxykinase (ATP) (Staphylococcus aureus (strain bovine RF122 / ET3-1)).